Consider the following 287-residue polypeptide: Small ribosomal subunit protein uS2 (287 aa).

The disordered stretch occupies residues 233–287 (HKAPQDDIEPMAEWEKQLLQSGDSSGETRPISGTDRPLDGDLSKGPAPQDEELSD). Residues 250-259 (LLQSGDSSGE) show a composition bias toward polar residues.

This sequence belongs to the universal ribosomal protein uS2 family.

This Tropheryma whipplei (strain TW08/27) (Whipple's bacillus) protein is Small ribosomal subunit protein uS2.